A 499-amino-acid chain; its full sequence is Bestrophin homolog 22 (499 aa).

4 helical membrane-spanning segments follow: residues 29 to 49 (WKAV…ISCI), 77 to 97 (IPLT…WGSI), 235 to 255 (LVYP…CLIG), and 267 to 287 (GIDL…MGWM). The span at 417 to 432 (HNAKHAKQRGLERANS) shows a compositional bias: basic and acidic residues. Disordered regions lie at residues 417-455 (HNAK…ANGS) and 474-499 (TSNP…TSRH).

It belongs to the anion channel-forming bestrophin (TC 1.A.46) family. Calcium-sensitive chloride channel subfamily. As to quaternary structure, forms oligomers.

The protein localises to the cell membrane. Forms chloride channels. The chain is Bestrophin homolog 22 (best-22) from Caenorhabditis elegans.